The sequence spans 475 residues: Sulfate adenylyltransferase subunit 1 (475 aa).

Residues 25 to 239 (KSLLRFLTCG…EVLETVEIQR (215 aa)) enclose the tr-type G domain. The segment at 34-41 (GSVDDGKS) is G1. A GTP-binding site is contributed by 34-41 (GSVDDGKS). The G2 stretch occupies residues 92–96 (GITID). The G3 stretch occupies residues 113 to 116 (DTPG). Residues 113-117 (DTPGH) and 168-171 (NKMD) contribute to the GTP site. The G4 stretch occupies residues 168-171 (NKMD). The G5 stretch occupies residues 206–208 (SAL).

It belongs to the TRAFAC class translation factor GTPase superfamily. Classic translation factor GTPase family. CysN/NodQ subfamily. Heterodimer composed of CysD, the smaller subunit, and CysN.

It carries out the reaction sulfate + ATP + H(+) = adenosine 5'-phosphosulfate + diphosphate. Its pathway is sulfur metabolism; hydrogen sulfide biosynthesis; sulfite from sulfate: step 1/3. Functionally, with CysD forms the ATP sulfurylase (ATPS) that catalyzes the adenylation of sulfate producing adenosine 5'-phosphosulfate (APS) and diphosphate, the first enzymatic step in sulfur assimilation pathway. APS synthesis involves the formation of a high-energy phosphoric-sulfuric acid anhydride bond driven by GTP hydrolysis by CysN coupled to ATP hydrolysis by CysD. This chain is Sulfate adenylyltransferase subunit 1, found in Escherichia coli O157:H7.